The sequence spans 136 residues: Pterin-4-alpha-carbinolamine dehydratase 2 (136 aa).

N6-acetyllysine; alternate is present on residues lysine 120, lysine 124, and lysine 131. Residues lysine 120, lysine 124, and lysine 131 each carry the N6-succinyllysine; alternate modification.

This sequence belongs to the pterin-4-alpha-carbinolamine dehydratase family. As to quaternary structure, homotetramer. Interacts with DYRK1B.

The catalysed reaction is (4aS,6R)-4a-hydroxy-L-erythro-5,6,7,8-tetrahydrobiopterin = (6R)-L-erythro-6,7-dihydrobiopterin + H2O. Involved in tetrahydrobiopterin biosynthesis. Seems to both prevent the formation of 7-pterins and accelerate the formation of quinonoid-BH2. Its function is as follows. Regulates the dimerization of homeodomain protein HNF-1-alpha and enhances its transcriptional activity. The protein is Pterin-4-alpha-carbinolamine dehydratase 2 (Pcbd2) of Mus musculus (Mouse).